The chain runs to 487 residues: Malonate-semialdehyde dehydrogenase 3 (487 aa).

NAD(+) is bound by residues F154, K178, E181, R182, and S231. The Nucleophile role is filled by C286. An NAD(+)-binding site is contributed by E386.

It belongs to the aldehyde dehydrogenase family. IolA subfamily. Homotetramer.

The enzyme catalyses 3-oxopropanoate + NAD(+) + CoA + H2O = hydrogencarbonate + acetyl-CoA + NADH + H(+). It carries out the reaction 2-methyl-3-oxopropanoate + NAD(+) + CoA + H2O = propanoyl-CoA + hydrogencarbonate + NADH + H(+). It participates in polyol metabolism; myo-inositol degradation into acetyl-CoA; acetyl-CoA from myo-inositol: step 7/7. Its function is as follows. Catalyzes the oxidation of malonate semialdehyde (MSA) and methylmalonate semialdehyde (MMSA) into acetyl-CoA and propanoyl-CoA, respectively. Is involved in a myo-inositol catabolic pathway. Bicarbonate, and not CO2, is the end-product of the enzymatic reaction. This is Malonate-semialdehyde dehydrogenase 3 from Bacillus cereus (strain ZK / E33L).